A 516-amino-acid chain; its full sequence is Histidine ammonia-lyase (516 aa).

The segment at residues 143 to 145 is a cross-link (5-imidazolinone (Ala-Gly)); sequence ASG. Ser144 carries the post-translational modification 2,3-didehydroalanine (Ser).

The protein belongs to the PAL/histidase family. In terms of processing, contains an active site 4-methylidene-imidazol-5-one (MIO), which is formed autocatalytically by cyclization and dehydration of residues Ala-Ser-Gly.

It is found in the cytoplasm. It carries out the reaction L-histidine = trans-urocanate + NH4(+). The protein operates within amino-acid degradation; L-histidine degradation into L-glutamate; N-formimidoyl-L-glutamate from L-histidine: step 1/3. This chain is Histidine ammonia-lyase, found in Koribacter versatilis (strain Ellin345).